Reading from the N-terminus, the 37-residue chain is Large ribosomal subunit protein bL36c (37 aa).

It belongs to the bacterial ribosomal protein bL36 family.

The protein localises to the plastid. The protein resides in the chloroplast. The protein is Large ribosomal subunit protein bL36c of Cycas taitungensis (Prince sago).